The chain runs to 400 residues: Cytohesin-2 (400 aa).

Positions 10–67 (DLTPEERMELENIRRRKQELLVEIQRLREELSEAMSEVEGLEANEGSKTLQRNRKMAM) form a coiled coil. The SEC7 domain maps to 72-201 (FNMDPKKGIQ…VIMLNTSLHN (130 aa)). The PH domain occupies 259-376 (NPDREGWLLK…WIKSIQAAVS (118 aa)). A 1,2-diacyl-sn-glycero-3-phospho-(1D-myo-inositol-3,4,5-trisphosphate) contacts are provided by residues 268-276 (KLGGGRVKT), Arg280, Tyr291, Arg301, Lys339, Asn350, and His351. Residues 387 to 395 (RKKRISVKK) are C-terminal autoinhibitory region.

In terms of assembly, heteromer. Composed of TAMALIN, CYTH2 and at least one GRM1. Interacts with ARRB1. Interacts with ARL4D; the interaction is direct. Directly interacts with CCDC120 through the coiled coil domain; this interaction stabilizes CCDC120, possibly by preventing its ubiquitination, and is required for neurite growth in a neuroblastoma cell line. Interacts with FRMD4A. Interacts (via N-terminal domain) with INAVA (via N-terminal domain). Present in all tissues tested, with highest protein levels in brain and adrenal.

It is found in the cell membrane. The protein resides in the cytoplasm. The protein localises to the cell projection. Its subcellular location is the growth cone. It localises to the cell junction. It is found in the tight junction. The protein resides in the adherens junction. Functionally, acts as a guanine-nucleotide exchange factor (GEF). Promotes guanine-nucleotide exchange on ARF1, ARF3 and ARF6. Activates ARF factors through replacement of GDP with GTP. The cell membrane form, in association with ARL4 proteins, recruits ARF6 to the plasma membrane. Involved in neurite growth. This chain is Cytohesin-2 (Cyth2), found in Mus musculus (Mouse).